Consider the following 587-residue polypeptide: MRSHYCGDLRASHDGETVELCGWVSRRRDHGGVIFLDLRDRNGLVQVVFDPDTVDAFALADKVRSEYVVRLSGRVRMRDESVRNNKMATGDIEVLGKELTILNEAETPPFELDAHSAAGEEVRLKYRYMDLRRPDVLKNFQFRSRLTHVVRAFLEGEGFMDVETPILTRATPEGARDYLVPSRTHPGSFFALPQSPQLFKQLLMVAGFDRYYQIAKCFRDEDLRADRQPEFTQIDLEASFVEEEDIMGITERMVRSVFKELLSVDLPDFPRMPFSEAMQRFGSDKPDLRIALELIDIADLLAGVDFKVFSGPANDPKGRVAAMRVPGGCSLSRKDIDGYTKFVSIYGAKGLAYIKVNDLAAGAEGLQSPILKFLTEDAIKGILERTGAETGDLIFFGADKAKIVNEALGALRVKVGHDLNLVEGEWAPLWVVDFPMFEEDEGQYHALHHPFTMPSCSAEELKSNPGEALSRAYDMVLNGTELGGGSIRIHSPAMQRTVFEALGISDEEAEEKFGFLLDGLKYGAPPHGGLAFGLDRMVMLMTGCESIRDVIAFPKTQTAACTMTNAPSPVDNKQLREVGVQVRKEEG.

Residue glutamate 173 participates in L-aspartate binding. Residues 197-200 (QLFK) are aspartate. Arginine 219 is a binding site for L-aspartate. ATP-binding positions include 219 to 221 (RDE) and glutamine 228. Residue histidine 448 participates in L-aspartate binding. Residue glutamate 481 coordinates ATP. Position 488 (arginine 488) interacts with L-aspartate. 533–536 (GLDR) provides a ligand contact to ATP.

The protein belongs to the class-II aminoacyl-tRNA synthetase family. Type 1 subfamily. In terms of assembly, homodimer.

The protein localises to the cytoplasm. It catalyses the reaction tRNA(Asx) + L-aspartate + ATP = L-aspartyl-tRNA(Asx) + AMP + diphosphate. In terms of biological role, aspartyl-tRNA synthetase with relaxed tRNA specificity since it is able to aspartylate not only its cognate tRNA(Asp) but also tRNA(Asn). Reaction proceeds in two steps: L-aspartate is first activated by ATP to form Asp-AMP and then transferred to the acceptor end of tRNA(Asp/Asn). The protein is Aspartate--tRNA(Asp/Asn) ligase of Alcanivorax borkumensis (strain ATCC 700651 / DSM 11573 / NCIMB 13689 / SK2).